Here is a 316-residue protein sequence, read N- to C-terminus: Ribosomal RNA small subunit methyltransferase H (316 aa).

Residues 32–34 (AGH), Asp52, Phe79, Asp100, and Gln107 contribute to the S-adenosyl-L-methionine site.

This sequence belongs to the methyltransferase superfamily. RsmH family.

The protein resides in the cytoplasm. It catalyses the reaction cytidine(1402) in 16S rRNA + S-adenosyl-L-methionine = N(4)-methylcytidine(1402) in 16S rRNA + S-adenosyl-L-homocysteine + H(+). Specifically methylates the N4 position of cytidine in position 1402 (C1402) of 16S rRNA. The sequence is that of Ribosomal RNA small subunit methyltransferase H from Lysinibacillus sphaericus (strain C3-41).